The sequence spans 930 residues: Short transient receptor potential channel 6 (930 aa).

The interval 1–27 is disordered; the sequence is MSQSPRFVTRRGGSLKAAPGAGTRRNE. The Cytoplasmic portion of the chain corresponds to 1–437; the sequence is MSQSPRFVTR…CSKMGKILRG (437 aa). ANK repeat units follow at residues 96-125, 131-160, 162-188, and 217-246; these read IEEE…SLNV, MGQN…LSRV, DALL…FAEG, and HDVT…RIER. Residues 438–458 traverse the membrane as a helical segment; that stretch reads PFMKFVAHAASFTIFLGLLVM. The Extracellular portion of the chain corresponds to 459–486; the sequence is NAADRFEGTKLLPNETSTDNARQLFRMK. The helical transmembrane segment at 487 to 507 threads the bilayer; that stretch reads TSCFSWMEMLIISWVIGMIWA. The Cytoplasmic segment spans residues 508-520; that stretch reads ECKEIWTQGPKEY. A helical transmembrane segment spans residues 521 to 541; that stretch reads LFELWNMLDFGMLAIFAASFI. Residues 542–591 lie on the Extracellular side of the membrane; that stretch reads ARFMAFWHASKAQSIIDANDTLKDLTKVTLGDNVKYYNLARIKWDPTDPQ. Asn-560 carries N-linked (GlcNAc...) asparagine glycosylation. A helical membrane pass occupies residues 592–612; that stretch reads IISEGLYAIAVVLSFSRIAYI. Residues 613 to 635 lie on the Cytoplasmic side of the membrane; that stretch reads LPANESFGPLQISLGRTVKDIFK. Residues 636-656 form a helical membrane-spanning segment; that stretch reads FMVIFIMVFVAFMIGMFNLYS. Topologically, residues 657–705 are extracellular; sequence YYIGAKQNEAFTTVEESFKTLFWAIFGLSEVKSVVINYNHKFIENIGYV. Residues 706 to 726 traverse the membrane as a helical segment; it reads LYGVYNVTMVIVLLNMLIAMI. Over 727–930 the chain is Cytoplasmic; the sequence is NSSFQEIEDD…LEPKLEESRR (204 aa). Ser-814 is modified (phosphoserine).

The protein belongs to the transient receptor (TC 1.A.4) family. STrpC subfamily. TRPC6 sub-subfamily. In terms of assembly, homodimer; forms channel complex. Interacts with MX1 and RNF24. In terms of processing, phosphorylated by FYN, leading to an increase of TRPC6 channel activity. N-glycosylated. Lung and brain.

The protein localises to the cell membrane. The catalysed reaction is Ca(2+)(in) = Ca(2+)(out). Its function is as follows. Forms a receptor-activated non-selective calcium permeant cation channel. Probably is operated by a phosphatidylinositol second messenger system activated by receptor tyrosine kinases or G-protein coupled receptors. Activated by diacylglycerol (DAG) in a membrane-delimited fashion, independently of protein kinase C. Seems not to be activated by intracellular calcium store depletion. The protein is Short transient receptor potential channel 6 of Mus musculus (Mouse).